The chain runs to 350 residues: Arginine N-succinyltransferase (350 aa).

Residue L125 participates in succinyl-CoA binding. H229 acts as the Proton donor in catalysis.

The protein belongs to the arginine N-succinyltransferase family.

It carries out the reaction succinyl-CoA + L-arginine = N(2)-succinyl-L-arginine + CoA + H(+). Its pathway is amino-acid degradation; L-arginine degradation via AST pathway; L-glutamate and succinate from L-arginine: step 1/5. Functionally, catalyzes the transfer of succinyl-CoA to arginine to produce N(2)-succinylarginine. The polypeptide is Arginine N-succinyltransferase (Yersinia pseudotuberculosis serotype IB (strain PB1/+)).